The chain runs to 1004 residues: Receptor-type tyrosine-protein phosphatase N2 (1004 aa).

The signal sequence occupies residues 1–27 (MGLPLPLLLLLLLPPPLPRALPAPASA). The tract at residues 1–409 (MGLPLPLLLL…PEAPLLEKSS (409 aa)) is involved in localization to secretory granules; interaction with CPE. Over 28–603 (RGRQLPGRLG…HPEEQEDSTK (576 aa)) the chain is Extracellular. Omega-N-methylarginine is present on arginine 259. 3 disordered regions span residues 274 to 294 (APAL…SLSM), 333 to 360 (QSDP…DAPE), and 393 to 459 (DHGS…WRLE). A Phosphoserine modification is found at serine 340. Basic and acidic residues-rich tracts occupy residues 341–356 (QESH…REQA) and 407–418 (KSSRAEMKKSEQ). The span at 419–430 (PEEVLSSEEETA) shows a compositional bias: acidic residues. 2 positions are modified to phosphoserine: serine 424 and serine 425. Residues 431–450 (GVEHVKSRTYSKDLLERKPN) are compositionally biased toward basic and acidic residues. Asparagine 553 is a glycosylation site (N-linked (GlcNAc...) asparagine). The helical transmembrane segment at 604–624 (FIVLTFLSIACILAVLLASSL) threads the bilayer. Residues 625–1004 (AYCLRHNSHY…VNAILKALPQ (380 aa)) lie on the Cytoplasmic side of the membrane. A Tyrosine-based internalization motif motif is present at residues 655–664 (YQELCRQRMA). Residues 665-710 (VRPQDHSEGPHTSRINSVSSQLSDGPMPSPSARSSTSSWSEEPAQS) are disordered. Residues 677 to 687 (SRINSVSSQLS) are compositionally biased toward polar residues. Serine 681 is modified (phosphoserine; by PKA). At serine 687 the chain carries Phosphoserine. Residues 694–710 (PSARSSTSSWSEEPAQS) are compositionally biased toward low complexity. Position 700 is a phosphothreonine; by PKA (threonine 700). One can recognise a Tyrosine-protein phosphatase domain in the interval 734-994 (LEKEWEALCA…EFALTAVAEE (261 aa)). Residues aspartate 902 and 934–940 (CSDGAGR) each bind substrate. The active-site Phosphocysteine intermediate is cysteine 934. Residue lysine 959 is modified to N6-acetyllysine. Glutamine 979 contacts substrate. Residues 993–999 (EEVNAIL) carry the Leucine-based sorting signal motif.

This sequence belongs to the protein-tyrosine phosphatase family. Receptor class 8 subfamily. In terms of assembly, self-associates. Interacts (via cytoplasmic domain) with PTPRN (via cytoplasmic domain). Interacts (precursor form) with CPE. Interacts with HAP1. Interacts with AP2A1 or AP2A2 and AP1G1; indicative for an association with adaptor protein complex 2 (AP-2) and adaptor protein complex 1 (AP-1). Interacts with AP2M1; indicative for an association with adaptor protein complex 2 (AP-2). Interacts with MYO5A. Subject to proteolytic cleavage at multiple sites.

The protein resides in the cytoplasmic vesicle. It is found in the secretory vesicle membrane. The protein localises to the secretory vesicle. It localises to the synaptic vesicle membrane. The enzyme catalyses O-phospho-L-tyrosyl-[protein] + H2O = L-tyrosyl-[protein] + phosphate. In terms of biological role, plays a role in vesicle-mediated secretory processes. Required for normal accumulation of secretory vesicles in hippocampus, pituitary and pancreatic islets. Required for the accumulation of normal levels of insulin-containing vesicles and preventing their degradation. Plays a role in insulin secretion in response to glucose stimuli. Required for normal accumulation of the neurotransmitters norepinephrine, dopamine and serotonin in the brain. In females, but not in males, required for normal accumulation and secretion of pituitary hormones, such as luteinizing hormone (LH) and follicle-stimulating hormone (FSH). Required to maintain normal levels of renin expression and renin release. May regulate catalytic active protein-tyrosine phosphatases such as PTPRA through dimerization. Has phosphatidylinositol phosphatase activity; the PIPase activity is involved in its ability to regulate insulin secretion. Can dephosphorylate phosphatidylinositol 4,5-biphosphate, phosphatidylinositol 5-phosphate and phosphatidylinositol 3-phosphate. Regulates PI(4,5)P2 level in the plasma membrane and localization of cofilin at the plasma membrane and thus is indirectly involved in regulation of actin dynamics related to cell migration and metastasis; upon hydrolysis of PI(4,5)P2 cofilin is released from the plasma membrane and acts in the cytoplasm in severing F-actin filaments. The chain is Receptor-type tyrosine-protein phosphatase N2 (Ptprn2) from Rattus norvegicus (Rat).